The primary structure comprises 20 residues: Phenol-soluble modulin alpha 4 peptide (20 aa).

This sequence belongs to the phenol-soluble modulin alpha peptides family.

Its function is as follows. Peptide which can recruit, activate and subsequently lyse neutrophils, thus eliminating the main cellular defense against infection. This Staphylococcus aureus (strain bovine RF122 / ET3-1) protein is Phenol-soluble modulin alpha 4 peptide (psmA4).